The following is a 453-amino-acid chain: Phosphoglucosamine mutase (453 aa).

Residue S110 is the Phosphoserine intermediate of the active site. Positions 110, 248, 250, and 252 each coordinate Mg(2+). At S110 the chain carries Phosphoserine.

Belongs to the phosphohexose mutase family. The cofactor is Mg(2+). In terms of processing, activated by phosphorylation.

It carries out the reaction alpha-D-glucosamine 1-phosphate = D-glucosamine 6-phosphate. Functionally, catalyzes the conversion of glucosamine-6-phosphate to glucosamine-1-phosphate. The protein is Phosphoglucosamine mutase of Mycolicibacterium smegmatis (strain ATCC 700084 / mc(2)155) (Mycobacterium smegmatis).